A 434-amino-acid polypeptide reads, in one-letter code: Nicotinate phosphoribosyltransferase (434 aa).

A Phosphohistidine; by autocatalysis modification is found at His242.

Belongs to the NAPRTase family. Transiently phosphorylated on a His residue during the reaction cycle. Phosphorylation strongly increases the affinity for substrates and increases the rate of nicotinate D-ribonucleotide production. Dephosphorylation regenerates the low-affinity form of the enzyme, leading to product release.

It catalyses the reaction nicotinate + 5-phospho-alpha-D-ribose 1-diphosphate + ATP + H2O = nicotinate beta-D-ribonucleotide + ADP + phosphate + diphosphate. It functions in the pathway cofactor biosynthesis; NAD(+) biosynthesis; nicotinate D-ribonucleotide from nicotinate: step 1/1. Catalyzes the synthesis of beta-nicotinate D-ribonucleotide from nicotinate and 5-phospho-D-ribose 1-phosphate at the expense of ATP. The protein is Nicotinate phosphoribosyltransferase of Allorhizobium ampelinum (strain ATCC BAA-846 / DSM 112012 / S4) (Agrobacterium vitis (strain S4)).